We begin with the raw amino-acid sequence, 249 residues long: Early E1A protein (249 aa).

The interval 38–46 is interaction with RB1 in competition with E2F1; sequence MSLHDLFDV. The tract at residues 74 to 131 is interaction with UBE2I; the sequence is SAAESGSGDSGVGEELLPVDLDLKCYEDGLPPSDPETDEATEAEEEAAMPTYVNENEN. Residues 96–100 carry the LXCXE motif, interaction with host RB1 and TMEM173/STING motif; sequence LKCYE. Residues 145 to 165 fold into a zinc finger; it reads CRACDFHRGTSGNPEAMCALC. The disordered stretch occupies residues 180–203; the sequence is DAEGESESGSPEDTDFPHPLTATP. Acidic residues predominate over residues 181–193; the sequence is AEGESESGSPEDT. Positions 238 to 242 match the PXDLS motif, CTBP-binding motif; that stretch reads PLNLS. The Nuclear localization signal signature appears at 244-248; that stretch reads KRPKC.

This sequence belongs to the adenoviridae E1A protein family. As to quaternary structure, interacts with host UBE2I; this interaction interferes with polySUMOylation. Interacts with host RB1; this interaction induces the aberrant dissociation of RB1-E2F1 complex thereby disrupting the activity of RB1 and activating E2F1-regulated genes. Interacts with host ATF7; the interaction enhances ATF7-mediated viral transactivation activity which requires the zinc binding domains of both proteins. Isoform early E1A 32 kDa protein and isoform early E1A 26 kDa protein interact (via N-terminus) with CUL1 and E3 ubiquitin ligase RBX1; these interactions inhibit RBX1-CUL1-dependent elongation reaction of ubiquitin chains and attenuate ubiquitination of SCF(FBXW7) target proteins. Interacts (via PXLXP motif) with host ZMYND11/BS69 (via MYND-type zinc finger); this interaction inhibits E1A mediated transactivation. Interacts with host EP300; this interaction stimulates the acetylation of RB1 by recruiting EP300 and RB1 into a multimeric-protein complex. Interacts with host CTBP1 and CTBP2; this interaction seems to potentiate viral replication. Interacts with host DCAF7. Interacts with host DYRK1A. Interacts with host KPNA4; this interaction allows E1A import into the host nucleus. Interacts with host EP400; this interaction stabilizes MYC. Interacts with host TBP protein; this interaction probably disrupts the TBP-TATA complex. Interacts (via LXCXE motif) with host TMEM173/STING; this interaction impairs the ability of TMEM173/STING to sense cytosolic DNA and promote the production of type I interferon (IFN-alpha and IFN-beta). Interacts (via C-terminus) with host ZBED1/hDREF (via C-terminus); the interaction is direct.

It localises to the host nucleus. Plays a role in viral genome replication by driving entry of quiescent cells into the cell cycle. Stimulation of progression from G1 to S phase allows the virus to efficiently use the cellular DNA replicating machinery to achieve viral genome replication. E1A protein has both transforming and trans-activating activities. Induces the disassembly of the E2F1 transcription factor from RB1 by direct competition for the same binding site on RB1, with subsequent transcriptional activation of E2F1-regulated S-phase genes and of the E2 region of the adenoviral genome. Release of E2F1 leads to the ARF-mediated inhibition of MDM2 and causes TP53/p53 to accumulate because it is not targeted for degradation by MDM2-mediated ubiquitination anymore. This increase in TP53, in turn, would arrest the cell proliferation and direct its death but this effect is counteracted by the viral protein E1B-55K. Inactivation of the ability of RB1 to arrest the cell cycle is critical for cellular transformation, uncontrolled cellular growth and proliferation induced by viral infection. Interaction with RBX1 and CUL1 inhibits ubiquitination of the proteins targeted by SCF(FBXW7) ubiquitin ligase complex, and may be linked to unregulated host cell proliferation. The tumorigenesis-restraining activity of E1A may be related to the disruption of the host CtBP-CtIP complex through the CtBP binding motif. Interaction with host TMEM173/STING impairs the ability of TMEM173/STING to sense cytosolic DNA and promote the production of type I interferon (IFN-alpha and IFN-beta). Promotes the sumoylation of host ZBED1/hDREF with SUMO1. The sequence is that of Early E1A protein from Homo sapiens (Human).